A 249-amino-acid chain; its full sequence is Triosephosphate isomerase (249 aa).

9–11 (NWK) provides a ligand contact to substrate. Residue H95 is the Electrophile of the active site. E165 functions as the Proton acceptor in the catalytic mechanism. Substrate contacts are provided by residues G171, S210, and 231 to 232 (GG).

Belongs to the triosephosphate isomerase family. In terms of assembly, homodimer.

The protein resides in the cytoplasm. The enzyme catalyses D-glyceraldehyde 3-phosphate = dihydroxyacetone phosphate. It participates in carbohydrate biosynthesis; gluconeogenesis. Its pathway is carbohydrate degradation; glycolysis; D-glyceraldehyde 3-phosphate from glycerone phosphate: step 1/1. Its function is as follows. Involved in the gluconeogenesis. Catalyzes stereospecifically the conversion of dihydroxyacetone phosphate (DHAP) to D-glyceraldehyde-3-phosphate (G3P). The chain is Triosephosphate isomerase from Hyphomonas neptunium (strain ATCC 15444).